The following is a 592-amino-acid chain: Probable 6-phosphofructo-2-kinase C222.13c (592 aa).

Residues 1–80 are disordered; that stretch reads MSNTGSARTE…PANDVEKMEV (80 aa). The segment covering 57–66 has biased composition (basic and acidic residues); it reads SIFKREELTP. 150-157 provides a ligand contact to ATP; the sequence is GIPATGKS. Active-site residues include Asp235 and Cys266. Arg300 is a binding site for beta-D-fructose 6-phosphate. His527 acts as the Proton donor in catalysis.

The protein localises to the cytoplasm. It localises to the nucleus. The enzyme catalyses beta-D-fructose 6-phosphate + ATP = beta-D-fructose 2,6-bisphosphate + ADP + H(+). In terms of biological role, synthesis of fructose 2,6-bisphosphate. This chain is Probable 6-phosphofructo-2-kinase C222.13c, found in Schizosaccharomyces pombe (strain 972 / ATCC 24843) (Fission yeast).